A 306-amino-acid chain; its full sequence is Acetyl-coenzyme A carboxylase carboxyl transferase subunit beta (306 aa).

The region spanning Leu-27–Pro-296 is the CoA carboxyltransferase N-terminal domain. 4 residues coordinate Zn(2+): Cys-31, Cys-34, Cys-50, and Cys-53. The segment at Cys-31–Cys-53 adopts a C4-type zinc-finger fold.

Belongs to the AccD/PCCB family. Acetyl-CoA carboxylase is a heterohexamer composed of biotin carboxyl carrier protein (AccB), biotin carboxylase (AccC) and two subunits each of ACCase subunit alpha (AccA) and ACCase subunit beta (AccD). Zn(2+) is required as a cofactor.

It localises to the cytoplasm. The enzyme catalyses N(6)-carboxybiotinyl-L-lysyl-[protein] + acetyl-CoA = N(6)-biotinyl-L-lysyl-[protein] + malonyl-CoA. It functions in the pathway lipid metabolism; malonyl-CoA biosynthesis; malonyl-CoA from acetyl-CoA: step 1/1. Functionally, component of the acetyl coenzyme A carboxylase (ACC) complex. Biotin carboxylase (BC) catalyzes the carboxylation of biotin on its carrier protein (BCCP) and then the CO(2) group is transferred by the transcarboxylase to acetyl-CoA to form malonyl-CoA. The protein is Acetyl-coenzyme A carboxylase carboxyl transferase subunit beta of Pseudomonas savastanoi pv. phaseolicola (strain 1448A / Race 6) (Pseudomonas syringae pv. phaseolicola (strain 1448A / Race 6)).